The primary structure comprises 880 residues: Tyrosine-protein kinase receptor TYRO3 (880 aa).

Positions 1 to 28 (MVYPGPPGLIAGLLLAALSLSCVDGAKA) are cleaved as a signal peptide. Ig-like C2-type domains are found at residues 29-114 (LGFV…KSVS) and 125-206 (PYFT…AIVE). Residues 29–414 (LGFVGHGYNL…QRHPHTRMSW (386 aa)) lie on the Extracellular side of the membrane. 2 N-linked (GlcNAc...) asparagine glycosylation sites follow: Asn37 and Asn49. Cys50 and Cys103 are oxidised to a cystine. Asn143 carries an N-linked (GlcNAc...) asparagine glycan. A disulfide bridge links Cys146 with Cys189. 2 Fibronectin type-III domains span residues 213–306 (PPFN…TKET) and 311–401 (LPQN…SKEE). 4 N-linked (GlcNAc...) asparagine glycosylation sites follow: Asn216, Asn279, Asn351, and Asn365. The chain crosses the membrane as a helical span at residues 415-435 (VPMVLGILTALVTVVAMTLIF). Topologically, residues 436–880 (LRKGRKETRF…MQEEQVVITL (445 aa)) are cytoplasmic. A Protein kinase domain is found at 503 to 774 (FTLGRTLGKG…VDLKQRLEAI (272 aa)). Residues 509-517 (LGKGEFGSV) and Lys535 each bind ATP. Asp640 serves as the catalytic Proton acceptor. Phosphotyrosine; by autocatalysis is present on Tyr671. The disordered stretch occupies residues 846-880 (EWSSSAQNGEARGLLHEEEEEEEEEMQEEQVVITL). Over residues 862–873 (EEEEEEEEEMQE) the composition is skewed to acidic residues.

It belongs to the protein kinase superfamily. Tyr protein kinase family. AXL/UFO subfamily. Tyrosine phosphorylated upon receptor stimulation. Detected in brain, spinal cord, intestine, lung, stomach, ovary, testis, skin and eye.

It localises to the cell membrane. It catalyses the reaction L-tyrosyl-[protein] + ATP = O-phospho-L-tyrosyl-[protein] + ADP + H(+). May be involved in cell adhesion processes, particularly in the central nervous system. In Xenopus laevis (African clawed frog), this protein is Tyrosine-protein kinase receptor TYRO3 (tyro3).